The chain runs to 147 residues: Myoglobin (147 aa).

A Globin domain is found at 2–141 (ADFDAVLKFW…VIADLEANYK (140 aa)). Nitrite is bound at residue H60. Position 60 (H60) interacts with O2. H89 provides a ligand contact to heme b.

It belongs to the globin family. As to quaternary structure, monomeric.

It localises to the cytoplasm. The protein localises to the sarcoplasm. It catalyses the reaction Fe(III)-heme b-[protein] + nitric oxide + H2O = Fe(II)-heme b-[protein] + nitrite + 2 H(+). It carries out the reaction H2O2 + AH2 = A + 2 H2O. Monomeric heme protein which primary function is to store oxygen and facilitate its diffusion within muscle tissues. Reversibly binds oxygen through a pentacoordinated heme iron and enables its timely and efficient release as needed during periods of heightened demand. Depending on the oxidative conditions of tissues and cells, and in addition to its ability to bind oxygen, it also has a nitrite reductase activity whereby it regulates the production of bioactive nitric oxide. Under stress conditions, like hypoxia and anoxia, it also protects cells against reactive oxygen species thanks to its pseudoperoxidase activity. The chain is Myoglobin (mb) from Sarda chiliensis (Pacific bonito).